Here is a 431-residue protein sequence, read N- to C-terminus: Adenylosuccinate synthetase (431 aa).

GTP is bound by residues 12-18 and 40-42; these read GDEGKGK and GHT. The active-site Proton acceptor is the Asp13. The Mg(2+) site is built by Asp13 and Gly40. Residues 13-16, 38-41, Thr131, Arg145, Gln225, Thr240, and Arg304 contribute to the IMP site; these read DEGK and NAGH. Catalysis depends on His41, which acts as the Proton donor. Position 300-306 (300-306) interacts with substrate; that stretch reads TNTGRRR. Residues Arg306, 332–334, and 414–416 contribute to the GTP site; these read KLD and STS.

The protein belongs to the adenylosuccinate synthetase family. Homodimer. It depends on Mg(2+) as a cofactor.

The protein resides in the cytoplasm. It carries out the reaction IMP + L-aspartate + GTP = N(6)-(1,2-dicarboxyethyl)-AMP + GDP + phosphate + 2 H(+). It participates in purine metabolism; AMP biosynthesis via de novo pathway; AMP from IMP: step 1/2. Plays an important role in the de novo pathway of purine nucleotide biosynthesis. Catalyzes the first committed step in the biosynthesis of AMP from IMP. The sequence is that of Adenylosuccinate synthetase from Methylocella silvestris (strain DSM 15510 / CIP 108128 / LMG 27833 / NCIMB 13906 / BL2).